A 97-amino-acid polypeptide reads, in one-letter code: Lipolysis-activating peptide 1-alpha chain (97 aa).

Positions 1–21 (MNIMLFCSVFILVSLTGLSVS) are cleaved as a signal peptide. The LCN-type CS-alpha/beta domain maps to 25-88 (PGNYPMSLYG…FWAAHKNHCK (64 aa)). Disulfide bonds link C39-C62, C48-C67, and C52-C69.

The protein belongs to the long (3 C-C) scorpion toxin superfamily. In terms of assembly, monomer (edited version) and heterodimer (non-edited version) of this alpha chain and a beta chain (AC P0CI43). In terms of tissue distribution, expressed by the venom gland.

It localises to the secreted. Functionally, the heterodimer non-edited LVP1 induces lipolysis in rat adipocytes. Induction of lipolysis by LVP1 appears to be mediated through the beta-2 adrenergic receptor pathway (ADRB2). In terms of biological role, the edited BmKBTx-like, similar to beta-toxins, may modulate voltage-gated sodium channels (Nav) and may block voltage-gated potassium channels (Kv). This Lychas mucronatus (Chinese swimming scorpion) protein is Lipolysis-activating peptide 1-alpha chain.